We begin with the raw amino-acid sequence, 170 residues long: UPF0260 protein RPB_3505 (170 aa).

The protein belongs to the UPF0260 family.

This is UPF0260 protein RPB_3505 from Rhodopseudomonas palustris (strain HaA2).